The following is a 272-amino-acid chain: ATP-dependent Clp protease proteolytic subunit, mitochondrial (272 aa).

Residues 1–52 constitute a mitochondrion transit peptide; that stretch reads MWPRVLLGEARVAVDGCRALLSRLAVHFSPPWTAVSCSPLRRSLHGTATRAF. The active-site Nucleophile is S149. H174 is a catalytic residue. The residue at position 196 (K196) is an N6-succinyllysine. K207 carries the N6-acetyllysine modification. A disordered region spans residues 240–272; the sequence is VLVHPPQDGEDEPELVQKETATAPTDPPAPTST.

It belongs to the peptidase S14 family. As to quaternary structure, fourteen CLPP subunits assemble into 2 heptameric rings which stack back to back to give a disk-like structure with a central cavity. Component of the ClpXP complex formed by the assembly of two CLPP heptameric rings with two CLPX hexameric rings, giving rise to a symmetrical structure with two central CLPP rings flanked by a CLPX ring at either end of the complex. Detected in liver (at protein level). High levels found in heart, liver and skeletal muscle.

It localises to the mitochondrion matrix. It catalyses the reaction Hydrolysis of proteins to small peptides in the presence of ATP and magnesium. alpha-casein is the usual test substrate. In the absence of ATP, only oligopeptides shorter than five residues are hydrolyzed (such as succinyl-Leu-Tyr-|-NHMec, and Leu-Tyr-Leu-|-Tyr-Trp, in which cleavage of the -Tyr-|-Leu- and -Tyr-|-Trp bonds also occurs).. Its function is as follows. Protease component of the ClpXP complex that cleaves peptides and various proteins in an ATP-dependent process. Has low peptidase activity in the absence of CLPX. The ClpXP complex can degrade CSN1S1, CSN2 and CSN3, as well as synthetic peptides (in vitro) and may be responsible for a fairly general and central housekeeping function rather than for the degradation of specific substrates. Cleaves PINK1 in the mitochondrion. The sequence is that of ATP-dependent Clp protease proteolytic subunit, mitochondrial from Mus musculus (Mouse).